The chain runs to 532 residues: Nectin-4 (532 aa).

A signal peptide spans methionine 1–cysteine 30. In terms of domain architecture, Ig-like V-type spans glycine 31 to lysine 142. Residues glycine 31 to leucine 344 lie on the Extracellular side of the membrane. Disulfide bonds link cysteine 51–cysteine 125, cysteine 169–cysteine 221, and cysteine 266–cysteine 312. Ig-like C2-type domains are found at residues proline 146–threonine 235 and alanine 244–serine 328. The tract at residues glycine 152 to leucine 179 is disordered. N-linked (GlcNAc...) asparagine glycans are attached at residues asparagine 189 and asparagine 282. The helical transmembrane segment at glycine 345–valine 365 threads the bilayer. Residues asparagine 366–valine 532 are Cytoplasmic-facing. Residues glutamine 453–methionine 491 form a disordered region. Residues proline 461–glutamine 474 are compositionally biased toward acidic residues.

It belongs to the nectin family.

It localises to the cell membrane. Its function is as follows. May be involved in cell adhesion. This Xenopus tropicalis (Western clawed frog) protein is Nectin-4.